The following is a 490-amino-acid chain: Cytochrome P450 90D2 (490 aa).

The chain crosses the membrane as a helical span at residues 4–24 (AAAGWAAPAFAVAAVVIWVVL). Cys437 lines the heme pocket.

This sequence belongs to the cytochrome P450 family. Heme is required as a cofactor.

It is found in the membrane. The catalysed reaction is 6-deoxoteasterone + reduced [NADPH--hemoprotein reductase] + O2 = 3-dehydro-6-deoxoteasterone + oxidized [NADPH--hemoprotein reductase] + 2 H2O + H(+). The protein operates within plant hormone biosynthesis; brassinosteroid biosynthesis. In terms of biological role, catalyzes the C6-oxidation step in brassinosteroids biosynthesis. May convert 6-deoxoteasterone (6-deoxoTE) to 3-dehydro-6-deoxoteasterone (6-deoxo3DT, 6-deoxo3DHT), and teasterone (TE) to 3-dehydroteasterone (3DT, 3-DHT). Involved in the elongation of leaf sheaths and stems. In Oryza sativa subsp. indica (Rice), this protein is Cytochrome P450 90D2.